The primary structure comprises 354 residues: Uroporphyrinogen decarboxylase (354 aa).

Substrate-binding positions include 27 to 31, Phe-46, Asp-77, Tyr-154, Ser-209, and His-327; that span reads RQAGR.

This sequence belongs to the uroporphyrinogen decarboxylase family. Homodimer.

Its subcellular location is the cytoplasm. It carries out the reaction uroporphyrinogen III + 4 H(+) = coproporphyrinogen III + 4 CO2. The protein operates within porphyrin-containing compound metabolism; protoporphyrin-IX biosynthesis; coproporphyrinogen-III from 5-aminolevulinate: step 4/4. In terms of biological role, catalyzes the decarboxylation of four acetate groups of uroporphyrinogen-III to yield coproporphyrinogen-III. The chain is Uroporphyrinogen decarboxylase from Pseudomonas syringae pv. tomato (strain ATCC BAA-871 / DC3000).